Reading from the N-terminus, the 273-residue chain is Protein FAM210A (273 aa).

The segment at 94-116 is disordered; it reads RVLSSSSTSQETPSEKKEETDPL. Residues 106-116 show a composition bias toward basic and acidic residues; that stretch reads PSEKKEETDPL. In terms of domain architecture, DUF1279 spans 118-230; sequence DKSISLYQRF…GYMSTPPPVK (113 aa). Residues 138-158 form a helical membrane-spanning segment; it reads LIPVHLITSGIWFGTFYYATI. Residues 233–269 adopt a coiled-coil conformation; sequence LQGRMEETKELITEKMEETKDRLTEKLQETKGKVSFK.

This sequence belongs to the FAM210 family. Interacts with ATAD3A. In terms of tissue distribution, expressed in skeletal muscle, heart, brain but not in bone.

It localises to the membrane. The protein resides in the mitochondrion. Its subcellular location is the cytoplasm. Its function is as follows. May play a role in the structure and strength of both muscle and bone. The chain is Protein FAM210A (Fam210a) from Mus musculus (Mouse).